The chain runs to 450 residues: Keratin, type I cytoskeletal 25 (450 aa).

The segment covering 1 to 11 (MSLRLSSASRR) has biased composition (low complexity). A disordered region spans residues 1–20 (MSLRLSSASRRSCPRPTTGS). Residues 1–78 (MSLRLSSASR…VNERGLLSGN (78 aa)) are head. Residues 79-114 (EKVTMQNLNDRLASYLDSVHALEEANADLEQKIKGW) are coil 1A. The region spanning 79-394 (EKVTMQNLND…LLIGGDDGAC (316 aa)) is the IF rod domain. The tract at residues 115-136 (YEKFGPGSCRGLDHDYSRYFPI) is linker 1. The tract at residues 137 to 228 (IDDLKNQIIA…KNHKEEMQVL (92 aa)) is coil 1B. Residues 229-251 (QCAAGGNVNVEMNAAPGVDLTVL) are linker 12. The tract at residues 252–390 (LNNMRAEYEA…ETYCLLIGGD (139 aa)) is coil 2. Residues 391 to 450 (DGACKSGGYKSKDYGSGNVGSQVKDPAKAIVVKKVLEEVDQRSKILTTRLHSLEEKSQSN) form a tail region. Phosphoserine is present on Ser442.

It belongs to the intermediate filament family. In terms of assembly, heterodimer of a type I and a type II keratin. Heterodimer with type II keratin KRT5 leading to the formation of keratin intermediate filament (KIF) network. Interacts with KRT6A to form filaments. Strongly expressed in skin and scalp, and weak expression observed in thymus and tongue. In the hair follicle, expressed in Henle layer, Huxley layer and in the inner root sheath cuticle of the hair follicle. Expression extends from the bulb region up to the point of differentiation into the three layers. Also present in the medulla of beard hair (at protein level).

It is found in the cytoplasm. Functionally, essential for the proper assembly of type I and type II keratin protein complexes and formation of keratin intermediate filaments in the inner root sheath (irs). Plays a role in the cytoskeleton organization. The polypeptide is Keratin, type I cytoskeletal 25 (Homo sapiens (Human)).